A 364-amino-acid polypeptide reads, in one-letter code: MAKNSVEFDRYIERKAFDNTKEGVKGLIDAKITEIPRIFHVPQDTLPDKKRSVSDLEIPTIDFASVNVDTPSREAIVEKVKYAVENWGFFQVINHGVPLNVLEEIKDGVRRFHEEEDPEVKKSYYSLDFTKNKFAYSSNFDLYSSSPSLTWRDSISCYMAPDPPTPEELPETCRDAMIEYSKHVLSLGDLLFELLSEALGLKSEILKSMDCLKSLLMICHYYPPCPQPDLTLGISKHSDNSFLTVLLQDNIGGLQILHQDSWVDVSPLPGALVVNVGDFLQLITNDKFISVEHRVLANTRGPRISVASFFSSSIRENSTVYGPMKELVSEENPPKYRDTTLREYSEGYFKKGLDGTSHLSNFRI.

The region spanning 213-312 (KSLLMICHYY…RISVASFFSS (100 aa)) is the Fe2OG dioxygenase domain. Fe cation contacts are provided by histidine 237, aspartate 239, and histidine 293. Arginine 303 serves as a coordination point for 2-oxoglutarate.

Belongs to the iron/ascorbate-dependent oxidoreductase family. It depends on Fe(2+) as a cofactor.

This is 1-aminocyclopropane-1-carboxylate oxidase homolog 11 from Arabidopsis thaliana (Mouse-ear cress).